The chain runs to 156 residues: Cytochrome c-type biogenesis protein CcmE 1 (156 aa).

At 1–8 (MNATRKQR) the chain is on the cytoplasmic side. Residues 9–29 (LCLVIGVLAAAALAVTLIVFA) form a helical; Signal-anchor for type II membrane protein membrane-spanning segment. The Periplasmic segment spans residues 30–156 (LQRNMSYLFT…ATAAPLTTPR (127 aa)). Residues H123 and Y127 each coordinate heme.

It belongs to the CcmE/CycJ family.

The protein resides in the cell inner membrane. In terms of biological role, heme chaperone required for the biogenesis of c-type cytochromes. Transiently binds heme delivered by CcmC and transfers the heme to apo-cytochromes in a process facilitated by CcmF and CcmH. This chain is Cytochrome c-type biogenesis protein CcmE 1, found in Xanthomonas oryzae pv. oryzae (strain MAFF 311018).